A 388-amino-acid chain; its full sequence is Putrescine N-methyltransferase 1 (388 aa).

Composition is skewed to polar residues over residues 1–14 (MEVI…STIF), 23–39 (GYQN…QNGT), and 46–88 (HQNG…GNEL). The interval 1 to 88 (MEVISTNTNG…TISHDNGNEL (88 aa)) is disordered. The PABS domain occupies 99-336 (PGWFSEFSAL…GVIGYMLCST (238 aa)). S-adenosyl-L-methionine is bound by residues Gln-130, Glu-205, and 236-237 (DG). Asp-255 functions as the Proton acceptor in the catalytic mechanism. Tyr-324 is a binding site for S-adenosyl-L-methionine.

The protein belongs to the class I-like SAM-binding methyltransferase superfamily. Spermidine/spermine synthase family. Mainly expressed in roots.

It carries out the reaction putrescine + S-adenosyl-L-methionine = N-methylputrescine + S-adenosyl-L-homocysteine + H(+). It participates in alkaloid biosynthesis; nicotine biosynthesis. Involved in the biosynthesis of pyridine alkaloid natural products, leading mainly to the production of anabasine, anatabine, nicotine and nornicotine, effective deterrents against herbivores with antiparasitic and pesticide properties (neurotoxins); nornicotine serves as the precursor in the synthesis of the carcinogen compound N'-nitrosonornicotine (NNN). Methyltransferase that mediates the conversion of putrescine to N-methylputrescine. This chain is Putrescine N-methyltransferase 1, found in Nicotiana attenuata (Coyote tobacco).